The following is a 218-amino-acid chain: MRLILLGAPGAGKGTQAGFIKDKYNIPQISTGDMLRAAVKAGTPLGIAAKKIMDEGGLVSDDIIIGLVKDRLKDGDCANGYLFDGFPRTIPQADAMKDAGVAIDYVLEIDVPDEAIVERMSGRRVHPASGRTYHVKFNPPKVAGRDDVTGEELIQRDDDKEETVKKRLSVYHDQTEVLVGYYNKWAESGQPGAPKYRKIAGVGPVDQIRDNAFKALEG.

An ATP-binding site is contributed by 10–15; sequence GAGKGT. The tract at residues 30–59 is NMP; sequence STGDMLRAAVKAGTPLGIAAKKIMDEGGLV. Residues Thr31, Arg36, 57 to 59, 85 to 88, and Gln92 each bind AMP; these read GLV and GFPR. The segment at 122-159 is LID; it reads GRRVHPASGRTYHVKFNPPKVAGRDDVTGEELIQRDDD. ATP-binding positions include Arg123 and 132–133; that span reads TY. Positions 156 and 167 each coordinate AMP. Gly203 lines the ATP pocket.

Belongs to the adenylate kinase family. In terms of assembly, monomer.

It is found in the cytoplasm. It carries out the reaction AMP + ATP = 2 ADP. The protein operates within purine metabolism; AMP biosynthesis via salvage pathway; AMP from ADP: step 1/1. Catalyzes the reversible transfer of the terminal phosphate group between ATP and AMP. Plays an important role in cellular energy homeostasis and in adenine nucleotide metabolism. This is Adenylate kinase from Herminiimonas arsenicoxydans.